The chain runs to 236 residues: Peroxisomal coenzyme A diphosphatase NUDT7 (236 aa).

Position 20 is an N6-succinyllysine (lysine 20). One can recognise a Nudix hydrolase domain in the interval 37 to 169; the sequence is SNKFSVLVPL…QKQITQSGRD (133 aa). The Nudix box motif lies at 77–98; it reads KRDPVDTDDTATALREAQEEVG. Residues glutamate 92 and glutamate 96 each coordinate Mg(2+). Lysine 178 is modified (N6-succinyllysine). The Microbody targeting signal signature appears at 234–236; that stretch reads SKL.

Belongs to the Nudix hydrolase family. PCD1 subfamily. Monomer. Mn(2+) serves as cofactor. It depends on Mg(2+) as a cofactor. Highly expressed in liver, brown adipose tissue and heart. Expressed at intermediate level in lung and kidney and at low level in brain. As to expression, expressed in liver, brown adipose tissue and heart at 20 times lower levels than isoform 1.

Its subcellular location is the peroxisome. It catalyses the reaction hexanoyl-CoA + H2O = hexanoyl-4'-phosphopantetheine + adenosine 3',5'-bisphosphate + 2 H(+). It carries out the reaction octanoyl-CoA + H2O = S-octanoyl-4'-phosphopantetheine + adenosine 3',5'-bisphosphate + 2 H(+). The enzyme catalyses butanoyl-CoA + H2O = S-butanoyl-4'-phosphopantetheine + adenosine 3',5'-bisphosphate + 2 H(+). The catalysed reaction is decanoyl-CoA + H2O = decanoyl-4'-phosphopantetheine + adenosine 3',5'-bisphosphate + 2 H(+). It catalyses the reaction dodecanoyl-CoA + H2O = S-dodecanoyl-4'-phosphopantetheine + adenosine 3',5'-bisphosphate + 2 H(+). It carries out the reaction tetradecanoyl-CoA + H2O = tetradecanoyl-4'-phosphopantetheine + adenosine 3',5'-bisphosphate + 2 H(+). The enzyme catalyses choloyl-CoA + H2O = S-choloyl-4'-phosphopantetheine + adenosine 3',5'-bisphosphate + 2 H(+). The catalysed reaction is 3alpha,7alpha,12alpha-trihydroxy-5beta-cholestan-26-oyl-CoA + H2O = 3alpha,7alpha,12alpha-trihydroxy-5beta-cholestan-26-oyl-4'-phosphopantetheine + adenosine 3',5'-bisphosphate + 2 H(+). It catalyses the reaction acetyl-CoA + H2O = S-acetyl-4'-phosphopantetheine + adenosine 3',5'-bisphosphate + 2 H(+). It carries out the reaction CoA + H2O = (R)-4'-phosphopantetheine + adenosine 3',5'-bisphosphate + 2 H(+). The enzyme catalyses propanoyl-CoA + H2O = propanoyl-4'-phosphopantetheine + adenosine 3',5'-bisphosphate + 2 H(+). The catalysed reaction is malonyl-CoA + H2O = malonyl-4'-phosphopantetheine + adenosine 3',5'-bisphosphate + 2 H(+). It catalyses the reaction succinyl-CoA + H2O = succinyl-4'-phosphopantetheine + adenosine 3',5'-bisphosphate + 2 H(+). It carries out the reaction a 5'-end CoA-ribonucleoside in mRNA + H2O = a 5'-end phospho-adenosine-phospho-ribonucleoside in mRNA + (R)-4'-phosphopantetheine + 2 H(+). With respect to regulation, inhibited by fluoride. Fatty acyl-coenzyme A (CoA) diphosphatase that hydrolyzes fatty acyl-CoA to yield acyl-4'-phosphopantetheine and adenosine 3',5'-bisphosphate. Cleaves CoA, CoA esters and oxidized CoA with similar efficiencies. Preferentially hydrolyzes medium-chain acyl-CoAs and bile acid-CoAs. Has no activity toward NDP-sugars, CDP-alcohols, (deoxy)nucleoside 5'-triphosphates, nucleoside 5'-di or monophosphates, diadenosine polyphosphates, NAD, NADH, NADP, NADPH or thymidine-5'-monophospho-p-nitrophenyl ester. May be required to eliminate oxidized CoA from peroxisomes, or regulate CoA and acyl-CoA levels in this organelle in response to metabolic demand. Does not play a role in U8 snoRNA decapping activity. Binds U8 snoRNA. Exhibits decapping activity towards dpCoA-capped RNAs in vitro. In Mus musculus (Mouse), this protein is Peroxisomal coenzyme A diphosphatase NUDT7.